A 93-amino-acid chain; its full sequence is Protein NONRESPONDING TO OXYLIPINS 2, mitochondrial (93 aa).

The transit peptide at 1 to 27 directs the protein to the mitochondrion; that stretch reads MASRCRSLSKPAFSAFRSAMNKPSIRP.

Expressed in cotyledons, roots and flowers.

The protein localises to the mitochondrion. Essential for mitochondrial morphology, functionality and distribution. Contributes to 9-lipoxygenase (9-LOX)-derived oxylipin synthesis, but not to brassinosteroids (BRs) signaling. Required for waving-inducing oxylipin 9-hydroxyoctadecatrienoic acid and derivatives (e.g. 9-HOT, 2-HOE, 13-HOT, 13-HOD, 13-KOD, 12,13-KHOD, 9-HOT, 9-HOD, 9-KOT, 9-KOD and 9,10-KHOE)-mediated root development regulation, including callose deposition, root waving and lateral roots formation. Involved in basal plant defense toward pathogenic bacteria (e.g. Pseudomonas syringae pv tomato), both in compatible (e.g. Pst DC3000) and incompatible (e.g. Pst DC3000 avrRPM1) interactions, as well as against obligate biotrophic pathogenic fungi (e.g. Golovinomyces cichoracearum), probably via the promotion of callose deposition in the cell wall. Confers sensitivity to the herbicide isoxaben, a herbicide inhibiting cellulose synthesis and altering the cell wall. This is Protein NONRESPONDING TO OXYLIPINS 2, mitochondrial from Arabidopsis thaliana (Mouse-ear cress).